A 363-amino-acid chain; its full sequence is Histidinol-phosphate aminotransferase (363 aa).

N6-(pyridoxal phosphate)lysine is present on Lys220.

Belongs to the class-II pyridoxal-phosphate-dependent aminotransferase family. Histidinol-phosphate aminotransferase subfamily. Homodimer. Requires pyridoxal 5'-phosphate as cofactor.

The enzyme catalyses L-histidinol phosphate + 2-oxoglutarate = 3-(imidazol-4-yl)-2-oxopropyl phosphate + L-glutamate. The protein operates within amino-acid biosynthesis; L-histidine biosynthesis; L-histidine from 5-phospho-alpha-D-ribose 1-diphosphate: step 7/9. This Chlorobium chlorochromatii (strain CaD3) protein is Histidinol-phosphate aminotransferase.